Here is a 242-residue protein sequence, read N- to C-terminus: Uridylate kinase (242 aa).

11–14 lines the ATP pocket; that stretch reads KLSG. The tract at residues 19–24 is involved in allosteric activation by GTP; the sequence is GDKGVG. Glycine 53 provides a ligand contact to UMP. Glycine 54 and arginine 58 together coordinate ATP. UMP is bound by residues aspartate 73 and 134–141; that span reads IGSPYFST. ATP-binding residues include asparagine 162, tyrosine 168, and aspartate 171.

This sequence belongs to the UMP kinase family. As to quaternary structure, homohexamer.

It is found in the cytoplasm. It carries out the reaction UMP + ATP = UDP + ADP. The protein operates within pyrimidine metabolism; CTP biosynthesis via de novo pathway; UDP from UMP (UMPK route): step 1/1. With respect to regulation, allosterically activated by GTP. Inhibited by UTP. In terms of biological role, catalyzes the reversible phosphorylation of UMP to UDP. This chain is Uridylate kinase, found in Streptococcus agalactiae serotype Ia (strain ATCC 27591 / A909 / CDC SS700).